The primary structure comprises 316 residues: MTKEFHHVTVLLHETIDMLDVKPDGIYVDATLGGAGHSEYLLSKLSEKGHLYAFDQDQNAIDNAQKRLAPYIEKGMVTFIKDNFRHLQARLREAGVQEIDGICYDLGVSSPQLDQRERGFSYKKDAPLDMRMNQDASLTAYEVVNHYDYHDLVRIFFKYGEDKFSKQIARKIEQEREVKPIETTTELAEIIKSAKPAKELKKKGHPAKQIFQSIRIEVNDELGAADESIQQAMDMLALDGRISVITFHSLEDRLTKQLFKEASTVEVPKGLPFIPDDLKPKMELVSRKPILPSAEELEANNRSHSAKLRVARKIHK.

Residues 35–37 (AGH), Asp-55, Phe-84, Asp-105, and Gln-112 contribute to the S-adenosyl-L-methionine site.

The protein belongs to the methyltransferase superfamily. RsmH family.

The protein localises to the cytoplasm. The catalysed reaction is cytidine(1402) in 16S rRNA + S-adenosyl-L-methionine = N(4)-methylcytidine(1402) in 16S rRNA + S-adenosyl-L-homocysteine + H(+). In terms of biological role, specifically methylates the N4 position of cytidine in position 1402 (C1402) of 16S rRNA. The chain is Ribosomal RNA small subunit methyltransferase H from Streptococcus pneumoniae (strain Hungary19A-6).